Consider the following 226-residue polypeptide: Putative ABC transporter ATP-binding protein DR_2469 (226 aa).

The ABC transporter domain occupies 2–225 (IELRHVSHHY…LRVYRERMTW (224 aa)). 33–40 (GSNGSGKS) provides a ligand contact to ATP.

The protein belongs to the ABC transporter superfamily.

It is found in the cell membrane. Probably part of an ABC transporter complex. Responsible for energy coupling to the transport system. The protein is Putative ABC transporter ATP-binding protein DR_2469 of Deinococcus radiodurans (strain ATCC 13939 / DSM 20539 / JCM 16871 / CCUG 27074 / LMG 4051 / NBRC 15346 / NCIMB 9279 / VKM B-1422 / R1).